The sequence spans 360 residues: Putative F-box protein At1g65770 (360 aa).

The region spanning 2–50 (ADWSTLPVDLLNMIAGRLFSNIELKRFRSICRSWRSSVPGAGKKNPFRT) is the F-box domain.

The sequence is that of Putative F-box protein At1g65770 from Arabidopsis thaliana (Mouse-ear cress).